Consider the following 359-residue polypeptide: N-acetylneuraminate-9-phosphate synthase (359 aa).

N6-acetyllysine occurs at positions 61, 74, and 79. Residue Ser275 is modified to Phosphoserine. Position 290 is an N6-acetyllysine (Lys290). Positions 294-353 constitute an AFP-like domain; the sequence is SVVAKVKIPAGTTLTLDMLTVKVGEPKGYPPEDIFNLAGKKVLVTIEEDDTVMEESVESH.

Ubiquitous.

The protein resides in the cytoplasm. The enzyme catalyses aldehydo-N-acetyl-D-mannosamine 6-phosphate + phosphoenolpyruvate + H2O = N-acetylneuraminate 9-phosphate + phosphate. Functionally, catalyzes condensation of phosphoenolpyruvate (PEP) and N-acetylmannosamine 6-phosphate (ManNAc-6-P) to synthesize N-acetylneuraminate-9-phosphate (Neu5Ac-9-P). Neu5Ac-9-P is the phosphorylated forms of sialic acid N-acetylneuraminic acid (Neu5Ac). In contrast with human ortholog, has no detectable activity towards D-mannose 6-phosphate. This is N-acetylneuraminate-9-phosphate synthase from Mus musculus (Mouse).